The following is a 270-amino-acid chain: Phosphatidylglycerol--prolipoprotein diacylglyceryl transferase (270 aa).

4 consecutive transmembrane segments (helical) span residues 18–38 (IAVH…LWLA), 55–75 (LVLF…VIFQ), 89–109 (IWNG…TGII), and 115–135 (GLSF…GQAI). A 1,2-diacyl-sn-glycero-3-phospho-(1'-sn-glycerol) is bound at residue R137. 3 helical membrane-spanning segments follow: residues 177–197 (QPTF…LLLL), 205–225 (GELF…IEGL), and 236–256 (LRIA…LIAY).

It belongs to the Lgt family.

The protein resides in the cell membrane. It catalyses the reaction L-cysteinyl-[prolipoprotein] + a 1,2-diacyl-sn-glycero-3-phospho-(1'-sn-glycerol) = an S-1,2-diacyl-sn-glyceryl-L-cysteinyl-[prolipoprotein] + sn-glycerol 1-phosphate + H(+). Its pathway is protein modification; lipoprotein biosynthesis (diacylglyceryl transfer). Catalyzes the transfer of the diacylglyceryl group from phosphatidylglycerol to the sulfhydryl group of the N-terminal cysteine of a prolipoprotein, the first step in the formation of mature lipoproteins. This Bacillus licheniformis (strain ATCC 14580 / DSM 13 / JCM 2505 / CCUG 7422 / NBRC 12200 / NCIMB 9375 / NCTC 10341 / NRRL NRS-1264 / Gibson 46) protein is Phosphatidylglycerol--prolipoprotein diacylglyceryl transferase.